The primary structure comprises 75 residues: Mu-conotoxin GIIIA (75 aa).

Residues M1 to A20 form the signal peptide. The propeptide occupies L21–R51. Disulfide bonds link C54–C66, C55–C71, and C61–C72. A 4-hydroxyproline; partial mark is found at P57 and P58. P68 is subject to 4-hydroxyproline. Residue A73 is modified to Alanine amide.

Belongs to the conotoxin M superfamily. Post-translationally, hydroxylated; hydroxylations improve the ability to block Nav1.4/SCN4A sodium channels but does not affect folding. Expressed by the venom duct.

Its subcellular location is the secreted. Mu-conotoxins block voltage-gated sodium channels (Nav). This toxin potently blocks rat Nav1.4/SCN4A (IC(50)= 19-110 nM). It also moderately blocks rNav1.1/SCN1A (Kd=260 nM), rNav1.2/SCN2A (IC(50)=2.7-17.8 uM), and mNav1.6/SCN8A (IC(50)=680 nM). The inhibition is reversible. In vivo, induces paralysis to an isolated skeletal muscle preparation from frog (cutaneous pectoralis) within a few minutes. This Conus geographus (Geography cone) protein is Mu-conotoxin GIIIA.